The sequence spans 421 residues: NADH-quinone oxidoreductase subunit F 2 (421 aa).

53–62 (GRGGAGFPTG) is a binding site for NAD(+). 165 to 212 (GAGAYICGEETAMLESLEGKRAQPRLKPPFPAVAGLYASPTVINNVET) is an FMN binding site. Positions 342, 345, 348, and 388 each coordinate [4Fe-4S] cluster.

It belongs to the complex I 51 kDa subunit family. FMN serves as cofactor. It depends on [4Fe-4S] cluster as a cofactor.

The catalysed reaction is a quinone + NADH + 5 H(+)(in) = a quinol + NAD(+) + 4 H(+)(out). In terms of biological role, NDH-1 shuttles electrons from NADH, via FMN and iron-sulfur (Fe-S) centers, to quinones in the respiratory chain. The immediate electron acceptor for the enzyme in this species is believed to be ubiquinone. Couples the redox reaction to proton translocation (for every two electrons transferred, four hydrogen ions are translocated across the cytoplasmic membrane), and thus conserves the redox energy in a proton gradient. This is NADH-quinone oxidoreductase subunit F 2 (nuoF2) from Rhizobium meliloti (strain 1021) (Ensifer meliloti).